We begin with the raw amino-acid sequence, 346 residues long: Nucleoplasmin-like protein ANO39 (346 aa).

N-acetylserine is present on Ser2. Asn85 is a glycosylation site (N-linked (GlcNAc...) asparagine). A compositionally biased stretch (acidic residues) spans Asp123 to Glu141. The disordered stretch occupies residues Asp123–Leu285. Ser145 is subject to Phosphoserine; by CDC2. The span at Ala171 to Lys180 shows a compositional bias: basic and acidic residues. A compositionally biased stretch (acidic residues) spans Glu181–Ser247. N-linked (GlcNAc...) asparagine glycosylation occurs at Asn264. Over residues Gly271–Leu285 the composition is skewed to basic and acidic residues.

The protein belongs to the nucleoplasmin family. Post-translationally, phosphorylation occurs in oocytes during the progression of the first meiotic M phase. No phosphorylation is observed in immature oocytes. In terms of tissue distribution, expressed specifically in the oocytes of the ovaries.

It is found in the nucleus. The protein localises to the nucleolus. Its subcellular location is the cytoplasm. Binds double-stranded RNA and both single-stranded and double-stranded DNA. The protein is Nucleoplasmin-like protein ANO39 of Patiria pectinifera (Starfish).